We begin with the raw amino-acid sequence, 234 residues long: Ubiquinone biosynthesis O-methyltransferase (234 aa).

4 residues coordinate S-adenosyl-L-methionine: R40, G59, D80, and M123.

It belongs to the methyltransferase superfamily. UbiG/COQ3 family.

It catalyses the reaction a 3-demethylubiquinol + S-adenosyl-L-methionine = a ubiquinol + S-adenosyl-L-homocysteine + H(+). The enzyme catalyses a 3-(all-trans-polyprenyl)benzene-1,2-diol + S-adenosyl-L-methionine = a 2-methoxy-6-(all-trans-polyprenyl)phenol + S-adenosyl-L-homocysteine + H(+). Its pathway is cofactor biosynthesis; ubiquinone biosynthesis. O-methyltransferase that catalyzes the 2 O-methylation steps in the ubiquinone biosynthetic pathway. In Coxiella burnetii (strain CbuK_Q154) (Coxiella burnetii (strain Q154)), this protein is Ubiquinone biosynthesis O-methyltransferase.